The chain runs to 1132 residues: Phospholipid-transporting ATPase IG (1132 aa).

The Cytoplasmic portion of the chain corresponds to 1-66; sequence MQMVPSLPPA…NFLPKNLFEQ (66 aa). A helical transmembrane segment spans residues 67-85; sequence FRRIANFYFLIIFLVQVTV. Position 86 (aspartate 86) is a topological domain, extracellular. Residues 87-107 form a helical membrane-spanning segment; sequence TPTSPVTSGLPLFFVITVTAI. At 108–290 the chain is on the cytoplasmic side; it reads KQGYEDCLRH…SQKRSAVEKS (183 aa). Residues 291-311 traverse the membrane as a helical segment; that stretch reads INAFLIVYLFILLTKAAVCTT. At 312-346 the chain is on the extracellular side; that stretch reads LKYVWQSTPYNDEPWYNQKTQKERETLKVLKMFTD. Residues 347-367 form a helical membrane-spanning segment; the sequence is FLSFMVLFNFIIPVSMYVTVE. The Cytoplasmic segment spans residues 368 to 879; that stretch reads MQKFLGSFFI…YVRIAHLVQY (512 aa). Catalysis depends on aspartate 412, which acts as the 4-aspartylphosphate intermediate. ATP is bound by residues aspartate 412, lysine 413, and threonine 414. Aspartate 412 is a Mg(2+) binding site. Residue threonine 414 participates in Mg(2+) binding. A Phosphoserine modification is found at serine 445. The ATP site is built by glutamate 501, phenylalanine 543, lysine 566, arginine 597, threonine 677, glycine 678, aspartate 679, arginine 792, and lysine 798. Aspartate 819 is a Mg(2+) binding site. ATP-binding residues include asparagine 822 and aspartate 823. Residue aspartate 823 coordinates Mg(2+). The chain crosses the membrane as a helical span at residues 880 to 900; that stretch reads FFYKNLCFILPQFLYQFFCGF. Over 901-908 the chain is Extracellular; the sequence is SQQPLYDA. The helical transmembrane segment at 909 to 929 threads the bilayer; the sequence is AYLTMYNICFTSLPILAYSLL. Residues 930-955 lie on the Cytoplasmic side of the membrane; that stretch reads EQHINIDTLTSDPRLYMKISGNAMLQ. The chain crosses the membrane as a helical span at residues 956–976; the sequence is LGPFLYWTFLAAFEGTVFFFG. Residues 977–995 are Extracellular-facing; sequence TYFLFQTASLEENGKVYGN. A helical membrane pass occupies residues 996–1016; that stretch reads WTFGTIVFTVLVFTVTLKLAL. Topologically, residues 1017–1026 are cytoplasmic; the sequence is DTRFWTWINH. The helical transmembrane segment at 1027 to 1047 threads the bilayer; that stretch reads FVIWGSLAFYVFFSFFWGGII. The Extracellular portion of the chain corresponds to 1048–1069; that stretch reads WPFLKQQRMYFVFAQMLSSVST. The helical transmembrane segment at 1070 to 1090 threads the bilayer; the sequence is WLAIILLIFISLFPEILLIVL. At 1091–1132 the chain is on the cytoplasmic side; the sequence is KNVRRRSARRNLSCRRASDSLSARPSVRPLLLRTFSDESNVL. Residues serine 1108, serine 1116, and serine 1126 each carry the phosphoserine modification. Residues 1116-1121 carry the Di-leucine motif motif; it reads SVRPLL.

It belongs to the cation transport ATPase (P-type) (TC 3.A.3) family. Type IV subfamily. As to quaternary structure, component of a P4-ATPase flippase complex which consists of a catalytic alpha subunit ATP11C and an accessory beta subunit TMEM30A. Requires Mg(2+) as cofactor. In terms of processing, proteolytically cleaved by CASP3, CASP6 and CASP7. Phosphorylated at Ser-1116 likely by PRKCA; this creates a functional di-leucine motif that is sufficient for endocytosis. Widely expressed.

It localises to the cell membrane. It is found in the endoplasmic reticulum membrane. The protein localises to the early endosome membrane. The protein resides in the recycling endosome membrane. It catalyses the reaction ATP + H2O + phospholipidSide 1 = ADP + phosphate + phospholipidSide 2.. The enzyme catalyses a 1,2-diacyl-sn-glycero-3-phospho-L-serine(out) + ATP + H2O = a 1,2-diacyl-sn-glycero-3-phospho-L-serine(in) + ADP + phosphate + H(+). It carries out the reaction a 1,2-diacyl-sn-glycero-3-phosphoethanolamine(out) + ATP + H2O = a 1,2-diacyl-sn-glycero-3-phosphoethanolamine(in) + ADP + phosphate + H(+). Its activity is regulated as follows. The flippase activity is inactivated by caspase-mediated cleavage in apoptotic cells, allowing for PS exposure on the cell surface and engulfment of apoptotic cells by macrophages. The ATPase activity is up-regulated by aminophospholipids PS and PE and down-regulated by Increasing intracellular Ca2+ levels. Functionally, catalytic component of a P4-ATPase flippase complex which catalyzes the hydrolysis of ATP coupled to the transport of aminophospholipids, phosphatidylserines (PS) and phosphatidylethanolamines (PE), from the outer to the inner leaflet of the plasma membrane. Major PS-flippase in immune cell subsets. In erythrocyte plasma membrane, it is required to maintain PS in the inner leaflet preventing its exposure on the surface. This asymmetric distribution is critical for the survival of erythrocytes in circulation since externalized PS is a phagocytic signal for erythrocyte clearance by splenic macrophages. Required for B cell differentiation past the pro-B cell stage. Seems to mediate PS flipping in pro-B cells. May be involved in the transport of cholestatic bile acids. The chain is Phospholipid-transporting ATPase IG from Homo sapiens (Human).